The chain runs to 309 residues: Eugenol synthase 2 (309 aa).

NADP(+)-binding positions include 13–16 (TGYI), 35–45 (VRETTVSDPVK), arginine 36, 86–88 (FMQ), 111–113 (SEF), lysine 134, and 154–156 (NCF). Catalysis depends on lysine 134, which acts as the Proton donor/acceptor.

Belongs to the NmrA-type oxidoreductase family. Mostly expressed in petals, and, to a lower extent, in sepals, stamens and pistils.

It carries out the reaction eugenol + a carboxylate + NADP(+) = a coniferyl ester + NADPH. It catalyses the reaction eugenol + acetate + NADP(+) = (E)-coniferyl acetate + NADPH. It functions in the pathway aromatic compound metabolism; phenylpropanoid biosynthesis. Its function is as follows. Catalyzes the synthesis of the phenylpropene eugenol from coniferyl acetate. Phenylpropenes are produced by plants as defense compounds with antimicrobial and antianimal properties, or as floral attractants of pollinators. This chain is Eugenol synthase 2, found in Clarkia breweri (Fairy fans).